The chain runs to 204 residues: Peptidyl-tRNA hydrolase (204 aa).

Tyr14 is a binding site for tRNA. His19 serves as the catalytic Proton acceptor. TRNA is bound by residues Phe64, Asn66, and Asn112.

This sequence belongs to the PTH family. As to quaternary structure, monomer.

The protein localises to the cytoplasm. It carries out the reaction an N-acyl-L-alpha-aminoacyl-tRNA + H2O = an N-acyl-L-amino acid + a tRNA + H(+). Its function is as follows. Hydrolyzes ribosome-free peptidyl-tRNAs (with 1 or more amino acids incorporated), which drop off the ribosome during protein synthesis, or as a result of ribosome stalling. Catalyzes the release of premature peptidyl moieties from peptidyl-tRNA molecules trapped in stalled 50S ribosomal subunits, and thus maintains levels of free tRNAs and 50S ribosomes. The sequence is that of Peptidyl-tRNA hydrolase from Azorhizobium caulinodans (strain ATCC 43989 / DSM 5975 / JCM 20966 / LMG 6465 / NBRC 14845 / NCIMB 13405 / ORS 571).